Consider the following 1070-residue polypeptide: MLRNRNEGMSTIPEFSQIQFEGFCRFIDWGLAEELHKFPKIEDTDQEIEFQLFVETYQLAEPLIKERDAVYESLTYSSELYVPAGLIWKPGKDMQEQTVFIGNIPLMSSLGIFIVNGIYRIVINQILQSPGIYYRSELDHNGIFIYTGTIISDWGGRSELEIDRKARIWARVSRKQKISILVSSSAMGSNLREILENVRYPEIFLSFLNERDKKKIGSRENAILEFYQQFACVGGDPVFSESLCRELQKKFFQQRCELGRIGRRNMNRRLNLDIPQNNTFLLPRDVLAAADHLIGMKFGMGTLDDMNHLKNKRIRSVADLLQDQFGLALVRLENVVRGTICGAIRHKLIPTPQNLVTSTPLTTTYESFFGLHPLSQVLDRTNPLTQIVHGRKSSYLGPGGLTGRTASFRIRDIHTSHYGRICPIDTSEGINVGLIGSLAIHARVGPWGSIKTPFYEISERSKRLQLVYLSPSVDEYHMVAAGNSLALNRGIQEEQAVPARYRQEFLTIAWEQIHLRSIFPFQYFSMGASLIPFIEHNDANRALMSSNMQRQAVPLSRSEKCIVGTGLERQAALDSGVSAISEREGKVIYTNTDKIILSGNGDTITIPLVMYQRSNKNTCMHQKTQVSRGKCIKKGQILANGAATVGGELALGKNVLVAYMPWEGYNFEDAVLISERLVYEDIYTSFHIRKYEIQTHVTSQGPERITKEIPHLETHLLRNLDRNGIVMLGSWVETGDILVGKLTPQTAKESSYAPEDRLLRAILGIQVSTSKETCLKLPIGGRGRVIDVRWIQKKGGSSYNPETIRVYISQKREMKVGDKVAGRHGNKGIISKILPRQDMPYLQDGTPVDMVFNPLGVPSRMNVGQIFECSLGLAGDFLGRHYRVAPFDERYEQEASRKLVFSELYEASKQTANPWVFEPEYPGKSRIFDGRTGDPFDQPVLIGKSYILKLIHQVDDKIHGRSSGHYALVTQQPLRGRAKQGGQRVGEMEVWALEGFGVAHILQEMLTYKSDHIRSRQEVLGTTIVGGTIANPGDAPESFRLLVRELRSLALELNHFLLSEKDFQIHRKEA.

The protein belongs to the RNA polymerase beta chain family. As to quaternary structure, in plastids the minimal PEP RNA polymerase catalytic core is composed of four subunits: alpha, beta, beta', and beta''. When a (nuclear-encoded) sigma factor is associated with the core the holoenzyme is formed, which can initiate transcription.

It is found in the plastid. The protein localises to the chloroplast. It carries out the reaction RNA(n) + a ribonucleoside 5'-triphosphate = RNA(n+1) + diphosphate. Its function is as follows. DNA-dependent RNA polymerase catalyzes the transcription of DNA into RNA using the four ribonucleoside triphosphates as substrates. In Piper cenocladum (Ant piper), this protein is DNA-directed RNA polymerase subunit beta.